Consider the following 23-residue polypeptide: Phospholipase A1 verutoxin-1 (23 aa).

Belongs to the AB hydrolase superfamily. Lipase family. Post-translationally, contains six disulfide bonds. Expressed by the venom gland.

The protein localises to the secreted. It carries out the reaction a 1,2-diacyl-sn-glycero-3-phosphocholine + H2O = a 2-acyl-sn-glycero-3-phosphocholine + a fatty acid + H(+). It catalyses the reaction 1-(9Z-octadecenoyl)-2-hexadecanoyl-sn-glycero-3-phosphocholine + H2O = 2-hexadecanoyl-sn-glycero-3-phosphocholine + (9Z)-octadecenoate + H(+). The enzyme catalyses a 1-acyl-sn-glycero-3-phosphocholine + H2O = sn-glycerol 3-phosphocholine + a fatty acid + H(+). It functions in the pathway phospholipid metabolism. Its activity is regulated as follows. Activity is maximal in the presence of calcium. However, unlike phospholipases A2 whose catalytic activity is strictly calcium-dependent, this enzyme shows considerable catalytic activity on phosphatidylcholine emulsified in calcium free solution; the catalytic activity of VT-1 assayed in the absence of calcium ions is 18-20% of that assayed in solution containing calcium ions. In terms of biological role, catalyzes the hydrolysis of glycerophospholipids such as phosphatidylcholine (1,2-diacyl-sn-glycero-3-phosphocholine) and has a moderate activity to hydrolyze lysoglycerophospholipids such as lysophosphatidylcholine (1-acyl-sn-glycero-3-phosphocholine), but is unable to hydrolyze sphingomyelin. Liberates the fatty acid from the sn-1 position of 1,2-diacyl-sn-glycero-3-phosphocholine mainly, indicating phospholipase activity of the A1 type. In addition to acting as an allergen, it possesses a moderate hemolytic activity on red blood cells of mice (3% of hemolysis at 3.0 ug/ml). The chain is Phospholipase A1 verutoxin-1 from Vespa velutina (Asian yellow-legged hornet).